The primary structure comprises 380 residues: Ceramide-binding protein svf1 (380 aa).

Residues Met-1 to Pro-18 form a peripherally associates with membranes region.

This sequence belongs to the SVF1 family.

It localises to the golgi apparatus. Its subcellular location is the cis-Golgi network membrane. The protein resides in the endoplasmic reticulum membrane. It is found in the cytoplasm. The protein localises to the nucleus. In terms of biological role, ceramide-binding protein that may transfer ceramides from the endoplasmic reticulum membrane to the cis-Golgi network membrane, and is thereby required for the biosynthesis of complex sphingolipids. The protein is Ceramide-binding protein svf1 of Schizosaccharomyces pombe (strain 972 / ATCC 24843) (Fission yeast).